The following is a 252-amino-acid chain: Diphthine synthase (252 aa).

Residues L9, D85, V88, 113-114 (SI), L165, A204, and H229 contribute to the S-adenosyl-L-methionine site.

This sequence belongs to the diphthine synthase family. Homodimer.

It carries out the reaction 2-[(3S)-amino-3-carboxypropyl]-L-histidyl-[translation elongation factor 2] + 3 S-adenosyl-L-methionine = diphthine-[translation elongation factor 2] + 3 S-adenosyl-L-homocysteine + 3 H(+). It participates in protein modification; peptidyl-diphthamide biosynthesis. Its function is as follows. S-adenosyl-L-methionine-dependent methyltransferase that catalyzes the trimethylation of the amino group of the modified target histidine residue in translation elongation factor 2 (EF-2), to form an intermediate called diphthine. The three successive methylation reactions represent the second step of diphthamide biosynthesis. The chain is Diphthine synthase from Methanocorpusculum labreanum (strain ATCC 43576 / DSM 4855 / Z).